The sequence spans 317 residues: MDKWQELTITVNREAEEAASNILIECGSQGVVIDDSADYLGKVGKYGEVFPEVEQVEMVTITAYYPESADMTVITAQVNERLAELTDFGLQTGQVQLTTQELAEEDWAENWKKYYEPTRITHDLTIVPSWTDYEVQAGEKIIKLDPGMAFGTGTHPTTKMSLFALEQVLRGGETVIDVGTGSGVLSVASSLLGAKEIFAYDLDDVAVRVAQENIDLNVGTENIHVTAGDLLKGIAIEADVIVANILADILVNLTDDAYRLVKDEGYLIMSGIISEKLDMVLEAAHSAGFFLETHMIQGEWNALVFKKTDAISGVIGG.

S-adenosyl-L-methionine contacts are provided by threonine 158, glycine 179, aspartate 201, and asparagine 244.

The protein belongs to the methyltransferase superfamily. PrmA family.

It localises to the cytoplasm. The enzyme catalyses L-lysyl-[protein] + 3 S-adenosyl-L-methionine = N(6),N(6),N(6)-trimethyl-L-lysyl-[protein] + 3 S-adenosyl-L-homocysteine + 3 H(+). Its function is as follows. Methylates ribosomal protein L11. The chain is Ribosomal protein L11 methyltransferase from Streptococcus mutans serotype c (strain ATCC 700610 / UA159).